We begin with the raw amino-acid sequence, 117 residues long: Large ribosomal subunit protein uL18 (117 aa).

This sequence belongs to the universal ribosomal protein uL18 family. Part of the 50S ribosomal subunit; part of the 5S rRNA/L5/L18/L25 subcomplex. Contacts the 5S and 23S rRNAs.

Functionally, this is one of the proteins that bind and probably mediate the attachment of the 5S RNA into the large ribosomal subunit, where it forms part of the central protuberance. The chain is Large ribosomal subunit protein uL18 from Enterobacter sp. (strain 638).